Here is a 460-residue protein sequence, read N- to C-terminus: NADH-ubiquinone oxidoreductase chain 4 (460 aa).

13 helical membrane passes run 20–42, 61–81, 94–113, 117–139, 148–168, 195–215, 225–245, 258–278, 285–304, 308–330, 351–371, 394–414, and 436–456; these read AKWL…LSWL, PLST…ILAS, RAYI…AFGA, IMFY…RWGN, TYFL…LLLM, LWWA…GVHL, PIAG…YGMM, LAYP…SICL, SLIA…GILI, WGFT…LFCL, MILP…LALP, LILT…LFLM, and LLII…ELMW.

This sequence belongs to the complex I subunit 4 family.

Its subcellular location is the mitochondrion membrane. It catalyses the reaction a ubiquinone + NADH + 5 H(+)(in) = a ubiquinol + NAD(+) + 4 H(+)(out). In terms of biological role, core subunit of the mitochondrial membrane respiratory chain NADH dehydrogenase (Complex I) that is believed to belong to the minimal assembly required for catalysis. Complex I functions in the transfer of electrons from NADH to the respiratory chain. The immediate electron acceptor for the enzyme is believed to be ubiquinone. This is NADH-ubiquinone oxidoreductase chain 4 (MT-ND4) from Oncorhynchus mykiss (Rainbow trout).